Reading from the N-terminus, the 325-residue chain is Elongation factor P--(R)-beta-lysine ligase (325 aa).

Substrate is bound at residue 76 to 78 (SPE). Residues 100 to 102 (RNE) and Asn109 each bind ATP. Position 118 (Tyr118) interacts with substrate. 244–245 (EL) serves as a coordination point for ATP. Glu251 serves as a coordination point for substrate. Residue Gly300 coordinates ATP.

The protein belongs to the class-II aminoacyl-tRNA synthetase family. EpmA subfamily. In terms of assembly, homodimer.

It catalyses the reaction D-beta-lysine + L-lysyl-[protein] + ATP = N(6)-((3R)-3,6-diaminohexanoyl)-L-lysyl-[protein] + AMP + diphosphate + H(+). With EpmB is involved in the beta-lysylation step of the post-translational modification of translation elongation factor P (EF-P) on 'Lys-34'. Catalyzes the ATP-dependent activation of (R)-beta-lysine produced by EpmB, forming a lysyl-adenylate, from which the beta-lysyl moiety is then transferred to the epsilon-amino group of EF-P 'Lys-34'. The sequence is that of Elongation factor P--(R)-beta-lysine ligase from Escherichia coli O139:H28 (strain E24377A / ETEC).